We begin with the raw amino-acid sequence, 261 residues long: Cytochrome c oxidase subunit 3 (261 aa).

Over 1–15 the chain is Mitochondrial matrix; sequence MAHQSHAYHMVKPSP. Residues 16–34 form a helical membrane-spanning segment; that stretch reads WPLTGALSALLTTSGLTMW. Residues 35–40 lie on the Mitochondrial intermembrane side of the membrane; it reads FHFHST. The helical transmembrane segment at 41-66 threads the bilayer; the sequence is TLLLTGLLTNALTMYQWWRDVVREST. Over 67-72 the chain is Mitochondrial matrix; sequence YQGHHT. The chain crosses the membrane as a helical span at residues 73-105; sequence LPVQKGLRYGMILFITSEVFFFAGFFWAFYHSS. The Mitochondrial intermembrane segment spans residues 106–128; sequence LAPTPQLGGHWPPTGIIPLNPLE. A helical membrane pass occupies residues 129–152; sequence VPLLNTSVLLASGVSITWAHHSLM. Residues 153 to 155 are Mitochondrial matrix-facing; that stretch reads ENN. A helical membrane pass occupies residues 156–183; sequence RTQMIQALLITILLGIYFTLLQASEYIE. Topologically, residues 184 to 190 are mitochondrial intermembrane; it reads APFTISD. The chain crosses the membrane as a helical span at residues 191–223; the sequence is GIYGSTFFMATGFHGLHVIIGSTFLTVCLARQL. Residues 224-232 lie on the Mitochondrial matrix side of the membrane; the sequence is LFHFTSKHH. The helical transmembrane segment at 233 to 256 threads the bilayer; it reads FGFEAAAWYWHFVDVVWLFLYVSI. Over 257–261 the chain is Mitochondrial intermembrane; that stretch reads YWWGS.

This sequence belongs to the cytochrome c oxidase subunit 3 family. As to quaternary structure, component of the cytochrome c oxidase (complex IV, CIV), a multisubunit enzyme composed of 14 subunits. The complex is composed of a catalytic core of 3 subunits MT-CO1, MT-CO2 and MT-CO3, encoded in the mitochondrial DNA, and 11 supernumerary subunits COX4I, COX5A, COX5B, COX6A, COX6B, COX6C, COX7A, COX7B, COX7C, COX8 and NDUFA4, which are encoded in the nuclear genome. The complex exists as a monomer or a dimer and forms supercomplexes (SCs) in the inner mitochondrial membrane with NADH-ubiquinone oxidoreductase (complex I, CI) and ubiquinol-cytochrome c oxidoreductase (cytochrome b-c1 complex, complex III, CIII), resulting in different assemblies (supercomplex SCI(1)III(2)IV(1) and megacomplex MCI(2)III(2)IV(2)).

The protein localises to the mitochondrion inner membrane. The enzyme catalyses 4 Fe(II)-[cytochrome c] + O2 + 8 H(+)(in) = 4 Fe(III)-[cytochrome c] + 2 H2O + 4 H(+)(out). In terms of biological role, component of the cytochrome c oxidase, the last enzyme in the mitochondrial electron transport chain which drives oxidative phosphorylation. The respiratory chain contains 3 multisubunit complexes succinate dehydrogenase (complex II, CII), ubiquinol-cytochrome c oxidoreductase (cytochrome b-c1 complex, complex III, CIII) and cytochrome c oxidase (complex IV, CIV), that cooperate to transfer electrons derived from NADH and succinate to molecular oxygen, creating an electrochemical gradient over the inner membrane that drives transmembrane transport and the ATP synthase. Cytochrome c oxidase is the component of the respiratory chain that catalyzes the reduction of oxygen to water. Electrons originating from reduced cytochrome c in the intermembrane space (IMS) are transferred via the dinuclear copper A center (CU(A)) of subunit 2 and heme A of subunit 1 to the active site in subunit 1, a binuclear center (BNC) formed by heme A3 and copper B (CU(B)). The BNC reduces molecular oxygen to 2 water molecules using 4 electrons from cytochrome c in the IMS and 4 protons from the mitochondrial matrix. This Pongo abelii (Sumatran orangutan) protein is Cytochrome c oxidase subunit 3 (MT-CO3).